Consider the following 205-residue polypeptide: Small ribosomal subunit protein mS26 (205 aa).

The transit peptide at 1–27 directs the protein to the mitochondrion; the sequence is MLRALSRLGAGTPCRPRAPLVLPARGR.

This sequence belongs to the mitochondrion-specific ribosomal protein mS26 family. In terms of assembly, component of the mitochondrial small ribosomal subunit (mt-SSU). Mature mammalian 55S mitochondrial ribosomes consist of a small (28S) and a large (39S) subunit. The 28S small subunit contains a 12S ribosomal RNA (12S mt-rRNA) and 30 different proteins. The 39S large subunit contains a 16S rRNA (16S mt-rRNA), a copy of mitochondrial valine transfer RNA (mt-tRNA(Val)), which plays an integral structural role, and 52 different proteins.

It is found in the mitochondrion. The protein is Small ribosomal subunit protein mS26 (MRPS26) of Homo sapiens (Human).